Here is a 345-residue protein sequence, read N- to C-terminus: Ferrochelatase (345 aa).

Fe cation is bound by residues histidine 215 and glutamate 296.

This sequence belongs to the ferrochelatase family.

Its subcellular location is the cytoplasm. The enzyme catalyses heme b + 2 H(+) = protoporphyrin IX + Fe(2+). The protein operates within porphyrin-containing compound metabolism; protoheme biosynthesis; protoheme from protoporphyrin-IX: step 1/1. Its function is as follows. Catalyzes the ferrous insertion into protoporphyrin IX. In Nitrobacter hamburgensis (strain DSM 10229 / NCIMB 13809 / X14), this protein is Ferrochelatase.